The chain runs to 75 residues: Large ribosomal subunit protein uL30 (75 aa).

Belongs to the universal ribosomal protein uL30 family. Part of the 50S ribosomal subunit.

The chain is Large ribosomal subunit protein uL30 from Roseiflexus castenholzii (strain DSM 13941 / HLO8).